The sequence spans 863 residues: DNA mismatch repair protein MutS (863 aa).

An ATP-binding site is contributed by 607–614 (GPNMAGKS).

This sequence belongs to the DNA mismatch repair MutS family.

In terms of biological role, this protein is involved in the repair of mismatches in DNA. It is possible that it carries out the mismatch recognition step. This protein has a weak ATPase activity. This chain is DNA mismatch repair protein MutS, found in Caldicellulosiruptor saccharolyticus (strain ATCC 43494 / DSM 8903 / Tp8T 6331).